Consider the following 197-residue polypeptide: dITP/XTP pyrophosphatase (197 aa).

Position 7–12 (Thr-7–Lys-12) interacts with substrate. Positions 44 and 73 each coordinate Mg(2+). Catalysis depends on Asp-73, which acts as the Proton acceptor. Substrate contacts are provided by residues Thr-74, Phe-156–Asp-159, Lys-179, and His-184–Arg-185.

Belongs to the HAM1 NTPase family. Homodimer. Requires Mg(2+) as cofactor.

It carries out the reaction XTP + H2O = XMP + diphosphate + H(+). The enzyme catalyses dITP + H2O = dIMP + diphosphate + H(+). It catalyses the reaction ITP + H2O = IMP + diphosphate + H(+). In terms of biological role, pyrophosphatase that catalyzes the hydrolysis of nucleoside triphosphates to their monophosphate derivatives, with a high preference for the non-canonical purine nucleotides XTP (xanthosine triphosphate), dITP (deoxyinosine triphosphate) and ITP. Seems to function as a house-cleaning enzyme that removes non-canonical purine nucleotides from the nucleotide pool, thus preventing their incorporation into DNA/RNA and avoiding chromosomal lesions. This chain is dITP/XTP pyrophosphatase, found in Elusimicrobium minutum (strain Pei191).